Consider the following 571-residue polypeptide: RNA polymerase sigma factor SigA (571 aa).

Positions 321-391 (MVESNLRLVI…TRAIADQART (71 aa)) are sigma-70 factor domain-2. Positions 345-348 (DLIQ) match the Interaction with polymerase core subunit RpoC motif. Residues 400–476 (ETINKVLRGA…DTAVESPAEA (77 aa)) are sigma-70 factor domain-3. The interval 489–542 (VLKTLTDRERFVLIHRFGLLDGRPKTLEEVGSAFNVTRERIRQIEAKALRKMRH) is sigma-70 factor domain-4. Positions 515–534 (LEEVGSAFNVTRERIRQIEA) form a DNA-binding region, H-T-H motif.

The protein belongs to the sigma-70 factor family. RpoD/SigA subfamily. Interacts transiently with the RNA polymerase catalytic core.

The protein localises to the cytoplasm. Functionally, sigma factors are initiation factors that promote the attachment of RNA polymerase to specific initiation sites and are then released. This sigma factor is the primary sigma factor during exponential growth. The protein is RNA polymerase sigma factor SigA of Chlamydia muridarum (strain MoPn / Nigg).